A 342-amino-acid chain; its full sequence is N-acetyl-gamma-glutamyl-phosphate reductase (342 aa).

The active site involves cysteine 149.

The protein belongs to the NAGSA dehydrogenase family. Type 1 subfamily.

It localises to the cytoplasm. It carries out the reaction N-acetyl-L-glutamate 5-semialdehyde + phosphate + NADP(+) = N-acetyl-L-glutamyl 5-phosphate + NADPH + H(+). Its pathway is amino-acid biosynthesis; L-arginine biosynthesis; N(2)-acetyl-L-ornithine from L-glutamate: step 3/4. In terms of biological role, catalyzes the NADPH-dependent reduction of N-acetyl-5-glutamyl phosphate to yield N-acetyl-L-glutamate 5-semialdehyde. The chain is N-acetyl-gamma-glutamyl-phosphate reductase from Aromatoleum aromaticum (strain DSM 19018 / LMG 30748 / EbN1) (Azoarcus sp. (strain EbN1)).